Consider the following 288-residue polypeptide: General transcription factor IIE subunit 2 (288 aa).

The segment at 16–56 (ALTTPAVEKRPSASSESSKKKRAKLELSSTSGSKPSSDGSN) is disordered. Low complexity predominate over residues 41–56 (ELSSTSGSKPSSDGSN). The TFIIE beta DNA-binding region spans 63–143 (SLSGSSGYKF…YAFKPKYNLK (81 aa)).

This sequence belongs to the TFIIE beta subunit family. In terms of assembly, tetramer of two alpha and two beta chains.

It localises to the nucleus. Recruits TFIIH to the initiation complex and stimulates the RNA polymerase II C-terminal domain kinase and DNA-dependent ATPase activities of TFIIH. Both TFIIH and TFIIE are required for promoter clearance by RNA polymerase. This Xenopus laevis (African clawed frog) protein is General transcription factor IIE subunit 2 (gtf2e2).